Here is a 413-residue protein sequence, read N- to C-terminus: Low-salt glycan biosynthesis hexosyltransferase Agl6 (413 aa).

A disordered region spans residues Met-1–Ile-27. A compositionally biased stretch (polar residues) spans Gln-16 to Ser-25. 4 consecutive transmembrane segments (helical) span residues Leu-270–Trp-290, Thr-304–Phe-324, Ile-355–Val-375, and Val-389–Gly-409.

This sequence belongs to the glycosyltransferase 2 family.

The protein localises to the membrane. Its pathway is protein modification; protein glycosylation. It participates in cell surface structure biogenesis; S-layer biogenesis. Its function is as follows. Hexosyltransferase involved in N-glycan biosynthetic pathway that takes place under low-salt conditions (1.75 M instead of 3.4 M). Participates in the formation of the tetrasaccharide present at 'Asn-532' of S-layer glycoprotein Csg, consisting of a sulfated hexose, 2 hexoses and rhamnose. Together with Agl5, mediates the addition of sugars 1 and 2 to dolichol phosphate in the tetrasaccharide. The chain is Low-salt glycan biosynthesis hexosyltransferase Agl6 (agl6) from Haloferax volcanii (strain ATCC 29605 / DSM 3757 / JCM 8879 / NBRC 14742 / NCIMB 2012 / VKM B-1768 / DS2) (Halobacterium volcanii).